A 394-amino-acid chain; its full sequence is GDSL esterase/lipase At2g27360 (394 aa).

The N-terminal stretch at 1-24 (MASQDCHMLLSFFISTFLITVVTS) is a signal peptide. The Nucleophile role is filled by S40. 2 N-linked (GlcNAc...) asparagine glycosylation sites follow: N136 and N319. Catalysis depends on residues D344 and H347. N-linked (GlcNAc...) asparagine glycosylation is found at N371 and N382.

It belongs to the 'GDSL' lipolytic enzyme family.

The protein localises to the secreted. This chain is GDSL esterase/lipase At2g27360, found in Arabidopsis thaliana (Mouse-ear cress).